The chain runs to 313 residues: Ribosomal RNA small subunit methyltransferase H (313 aa).

S-adenosyl-L-methionine-binding positions include 35–37 (GGH), Asp55, Phe81, Asp103, and Gln110.

The protein belongs to the methyltransferase superfamily. RsmH family.

Its subcellular location is the cytoplasm. The catalysed reaction is cytidine(1402) in 16S rRNA + S-adenosyl-L-methionine = N(4)-methylcytidine(1402) in 16S rRNA + S-adenosyl-L-homocysteine + H(+). Specifically methylates the N4 position of cytidine in position 1402 (C1402) of 16S rRNA. This chain is Ribosomal RNA small subunit methyltransferase H, found in Pseudomonas aeruginosa (strain LESB58).